Consider the following 579-residue polypeptide: Moesin a (579 aa).

One can recognise an FERM domain in the interval 5 to 295 (ISVRVTTMDA…GNHELYMRRR (291 aa)). A coiled-coil region spans residues 306–448 (KAQAKEEKNH…EDEALEWQTK (143 aa)). 3 disordered regions span residues 308 to 341 (QAKEEKNHKKMERALLEDERKKREQAEKEKEKIE), 376 to 418 (EQER…EHLA), and 464 to 519 (KNKV…KNER). Residues 376–400 (EQERKRAQEEAERLERERRLAEEAK) are compositionally biased toward basic and acidic residues. The segment covering 490-501 (AEASAELTSAAA) has biased composition (low complexity). Positions 502–519 (YKDRSEEERMTEAEKNER) are enriched in basic and acidic residues. The stretch at 517-551 (NERVQKHLLALTSELANARDETKKTQNDIIHAENV) forms a coiled coil.

It is found in the cell membrane. The protein localises to the cell junction. Functionally, positively regulates endothelial adherens junction formation and stabilization. Is thereby required for intersegmental vessel luminal membrane formation and stabilization during tubulogenesis in the early stages of development, independent of blood flow dynamics. The polypeptide is Moesin a (Danio rerio (Zebrafish)).